The following is a 335-amino-acid chain: Probable cytosolic iron-sulfur protein assembly protein Ciao1 (335 aa).

WD repeat units follow at residues 12–51, 57–96, 101–140, 146–185, 192–231, 250–289, and 301–335; these read GHKG…WSTK, GHKR…FECN, GHEN…EFEC, SHTQ…NDWD, SHTS…NSAG, QHSR…KPDE, and AHDQ…KVTE.

It belongs to the WD repeat CIA1 family.

Essential component of the cytosolic iron-sulfur (Fe/S) protein assembly machinery. Required for the maturation of extramitochondrial Fe/S proteins. The chain is Probable cytosolic iron-sulfur protein assembly protein Ciao1 from Drosophila yakuba (Fruit fly).